The following is a 319-amino-acid chain: Probable murein peptide carboxypeptidase (319 aa).

Residue serine 116 is the Nucleophile of the active site. Active-site charge relay system residues include glutamate 214 and histidine 284.

This sequence belongs to the peptidase S66 family.

It localises to the cytoplasm. The protein operates within cell wall degradation; peptidoglycan degradation. In terms of biological role, may be involved in the degradation of peptidoglycan by catalyzing the cleavage of the terminal D-alanine residue from cytoplasmic murein peptides. This chain is Probable murein peptide carboxypeptidase (ykfA), found in Bacillus subtilis (strain 168).